The sequence spans 714 residues: Macrophage-expressed gene 1 protein (714 aa).

The N-terminal stretch at 1–19 (MNSFMAIALIWMMIACAEA) is a signal peptide. The MACPF domain maps to 30-345 (GFQTCKDTLK…TAVRHYYTFN (316 aa)). C34 and C70 are disulfide-bonded. Beta stranded transmembrane passes span 113–120 (FSINTELS) and 127–132 (GKFSTE). N185 is a glycosylation site (N-linked (GlcNAc...) asparagine). 2 consecutive transmembrane segments (beta stranded) span residues 235–244 (TVTASAGIAF) and 248–256 (VNFKVETDH). The N-linked (GlcNAc...) asparagine glycan is linked to N269. C350 and C369 form a disulfide bridge. Residue N375 is glycosylated (N-linked (GlcNAc...) asparagine). 5 disulfide bridges follow: C385–C394, C432–C446, C436–C442, C531–C569, and C554–C574. The segment at 410–653 (PSGYTPVHLL…GDGNGMSGGE (244 aa)) is P2. A helical transmembrane segment spans residues 654–674 (AAGVTLGVIIALGIVITLAIY). Residues 690–714 (EQESLVGSFATDASPPNGEQDPCPA) form a disordered region.

The protein belongs to the MPEG1 family. In terms of assembly, homooligomer; predominantly forms a homooligomeric arc-shaped pore complex instead of complete rings of 16 subunits. Post-translationally, proteolytically processed in two steps to generate the Macrophage-expressed gene 1 protein, processed form: cleaved by trypsin in proximity of the helical transmembrane domain releases the ectodomain into the lysosomal lumen to orient the pore-forming domain toward the endogenous membranes, and processed by the asparagine endopeptidase (LGMN). Proteolytic processing in antigen-containing vesicles is pH-dependent. Monoubiquitinated in response to bacterial infection; ubiquitination is required for vesicular localization and antibacterial activity and can be blocked by bacterial cell cycle inhibiting factor (cif).

Its subcellular location is the cytoplasmic vesicle membrane. It localises to the cytoplasmic vesicle. The protein localises to the phagosome membrane. Its activity is regulated as follows. Forms arc- and ring-shaped pre-pores on top of the membrane at neutral to slightly acidic pH conditions and converts to pores upon acidification. Undergoes transition from the pre-pore to the pore in a processive clockwise hand-over-hand process. In the pore state, 2 alpha-helical regions refold into transmembrane hairpins (TMH1 and TMH2) in each protomer that form in the ensemble complex giant beta-barrel transmembrane pores. Pore-forming protein involved in both innate and adaptive immunity. Plays a central role in antigen cross-presentation in dendritic cells by forming a pore in antigen-containing compartments, thereby promoting delivery of antigens for cross-presentation. Also involved in innate immune response following bacterial infection; shows antibacterial activity against a wide spectrum of Gram-positive, Gram-negative and acid-fast bacteria. Reduces the viability of the intracytosolic pathogen L.monocytogenes by inhibiting acidification of the phagocytic vacuole of host cells which restricts bacterial translocation from the vacuole to the cytosol. Required for the antibacterial activity of reactive oxygen species and nitric oxide. Its function is as follows. Pore-forming protein that plays a central role in antigen cross-presentation in dendritic cells by mediating delivery of antigens for cross-presentation. Dendritic cells bridge innate and adaptive immunity by capturing exogenous antigens on MHC class-I molecules and presenting them to naive CD8(+) T-cells. Acts by forming a pore in antigen-containing compartments, promoting the release of antigens into the cytosol, enabling generation of MHCI:peptide complexes and T-cell priming. This Rattus norvegicus (Rat) protein is Macrophage-expressed gene 1 protein (Mpeg1).